A 609-amino-acid chain; its full sequence is UvrABC system protein C (609 aa).

The GIY-YIG domain maps to 15 to 92 (TGSGVYQMQD…IKQFRPRYNV (78 aa)). In terms of domain architecture, UVR spans 202 to 237 (DQVIIKLTERMEVTSENLVFEEAAHYRDQIRQLRRL).

It belongs to the UvrC family. In terms of assembly, interacts with UvrB in an incision complex.

The protein localises to the cytoplasm. Its function is as follows. The UvrABC repair system catalyzes the recognition and processing of DNA lesions. UvrC both incises the 5' and 3' sides of the lesion. The N-terminal half is responsible for the 3' incision and the C-terminal half is responsible for the 5' incision. The polypeptide is UvrABC system protein C (Coxiella burnetii (strain RSA 493 / Nine Mile phase I)).